The chain runs to 325 residues: DNA repair and recombination protein RadA (325 aa).

107-114 is an ATP binding site; it reads GEFGSGKT.

The protein belongs to the eukaryotic RecA-like protein family.

Functionally, involved in DNA repair and in homologous recombination. Binds and assemble on single-stranded DNA to form a nucleoprotein filament. Hydrolyzes ATP in a ssDNA-dependent manner and promotes DNA strand exchange between homologous DNA molecules. This Methanosarcina acetivorans (strain ATCC 35395 / DSM 2834 / JCM 12185 / C2A) protein is DNA repair and recombination protein RadA.